Consider the following 161-residue polypeptide: Cyclic pyranopterin monophosphate synthase (161 aa).

Residues 75-77 (LCH) and 113-114 (ME) contribute to the substrate site. Residue Asp-128 is part of the active site.

Belongs to the MoaC family. As to quaternary structure, homohexamer; trimer of dimers.

It carries out the reaction (8S)-3',8-cyclo-7,8-dihydroguanosine 5'-triphosphate = cyclic pyranopterin phosphate + diphosphate. The protein operates within cofactor biosynthesis; molybdopterin biosynthesis. In terms of biological role, catalyzes the conversion of (8S)-3',8-cyclo-7,8-dihydroguanosine 5'-triphosphate to cyclic pyranopterin monophosphate (cPMP). The sequence is that of Cyclic pyranopterin monophosphate synthase from Salmonella typhi.